A 187-amino-acid chain; its full sequence is uncharacterized protein (187 aa).

Residues 42–63 are disordered; sequence RTNGPGKDSFSFSTSGSKPSSS. Low complexity predominate over residues 50 to 63; it reads SFSFSTSGSKPSSS.

This is an uncharacterized protein from Saccharomyces cerevisiae (strain ATCC 204508 / S288c) (Baker's yeast).